The primary structure comprises 90 residues: Cytochrome c7 (90 aa).

An N-terminal signal peptide occupies residues 1–20 (MKRIIASLALSVFCAGLAFA). 12 residues coordinate heme: H37, H40, C47, C50, H51, H67, C70, C73, H74, C84, C87, and H88.

Post-translationally, binds 3 heme groups per subunit.

Functionally, may be involved in anaerobic iron respiration. This is Cytochrome c7 from Geobacter metallireducens (strain ATCC 53774 / DSM 7210 / GS-15).